Consider the following 190-residue polypeptide: Large ribosomal subunit protein uL5 (190 aa).

Belongs to the universal ribosomal protein uL5 family. Part of the 50S ribosomal subunit; contacts the 5S rRNA and probably tRNA. Forms a bridge to the 30S subunit in the 70S ribosome.

Its function is as follows. This is one of the proteins that bind and probably mediate the attachment of the 5S RNA into the large ribosomal subunit, where it forms part of the central protuberance. In the 70S ribosome it contacts protein S13 of the 30S subunit (bridge B1b), connecting the 2 subunits; this bridge is implicated in subunit movement. May contact the P site tRNA; the 5S rRNA and some of its associated proteins might help stabilize positioning of ribosome-bound tRNAs. The polypeptide is Large ribosomal subunit protein uL5 (Methanocaldococcus jannaschii (strain ATCC 43067 / DSM 2661 / JAL-1 / JCM 10045 / NBRC 100440) (Methanococcus jannaschii)).